The primary structure comprises 368 residues: tRNA/tmRNA (uracil-C(5))-methyltransferase (368 aa).

S-adenosyl-L-methionine contacts are provided by Gln190, Tyr218, Asn223, Glu239, and Asp301. Cys326 serves as the catalytic Nucleophile. Glu360 (proton acceptor) is an active-site residue.

This sequence belongs to the class I-like SAM-binding methyltransferase superfamily. RNA M5U methyltransferase family. TrmA subfamily.

It carries out the reaction uridine(54) in tRNA + S-adenosyl-L-methionine = 5-methyluridine(54) in tRNA + S-adenosyl-L-homocysteine + H(+). The enzyme catalyses uridine(341) in tmRNA + S-adenosyl-L-methionine = 5-methyluridine(341) in tmRNA + S-adenosyl-L-homocysteine + H(+). Functionally, dual-specificity methyltransferase that catalyzes the formation of 5-methyluridine at position 54 (m5U54) in all tRNAs, and that of position 341 (m5U341) in tmRNA (transfer-mRNA). The protein is tRNA/tmRNA (uracil-C(5))-methyltransferase of Aliivibrio salmonicida (strain LFI1238) (Vibrio salmonicida (strain LFI1238)).